Consider the following 221-residue polypeptide: Histone H1.3 (221 aa).

The segment covering 1 to 17 (MSETAPLAPTIPAPAEK) has biased composition (low complexity). Residues 1 to 43 (MSETAPLAPTIPAPAEKTPVKKKAKKAGATAGKRKASGPPVSE) are disordered. Residue serine 2 is modified to N-acetylserine. Serine 2 carries the post-translational modification Phosphoserine. N6-acetyllysine is present on lysine 17. Position 18 is a phosphothreonine (threonine 18). Residues 20-36 (VKKKAKKAGATAGKRKA) are compositionally biased toward basic residues. An N6-(beta-hydroxybutyryl)lysine mark is found at lysine 35, lysine 47, and lysine 53. The region spanning 37 to 110 (SGPPVSELIT…GASGSFKLNK (74 aa)) is the H15 domain. The residue at position 55 (arginine 55) is a Citrulline. N6-(beta-hydroxybutyryl)lysine is present on residues lysine 65, lysine 76, lysine 86, and lysine 91. The tract at residues 90 to 221 (SKGTLVQTKG…KAKKAAPKKK (132 aa)) is disordered. A Phosphoserine; by PKC modification is found at serine 105. N6-(beta-hydroxybutyryl)lysine is present on lysine 107. Basic residues-rich tracts occupy residues 120-141 (KAKK…KPKK), 150-161 (KSIKKTPKKVKK), and 170-179 (KVAKSAKKVK). Lysine 170 is subject to N6-(beta-hydroxybutyryl)lysine. Low complexity predominate over residues 180–193 (TPQPKKAAKSPAKA). A compositionally biased stretch (basic residues) spans 194 to 221 (KAPKPKAAKPKSGKPKVTKAKKAAPKKK).

Belongs to the histone H1/H5 family. In terms of processing, H1 histones are progressively phosphorylated during the cell cycle, becoming maximally phosphorylated during late G2 phase and M phase, and being dephosphorylated sharply thereafter. Citrullination at Arg-55 (H1R54ci) by PADI4 takes place within the DNA-binding site of H1 and results in its displacement from chromatin and global chromatin decondensation, thereby promoting pluripotency and stem cell maintenance.

It localises to the nucleus. Its subcellular location is the chromosome. Histone H1 protein binds to linker DNA between nucleosomes forming the macromolecular structure known as the chromatin fiber. Histones H1 are necessary for the condensation of nucleosome chains into higher-order structured fibers. Also acts as a regulator of individual gene transcription through chromatin remodeling, nucleosome spacing and DNA methylation. This Homo sapiens (Human) protein is Histone H1.3.